Here is a 1788-residue protein sequence, read N- to C-terminus: Glutamine and serine-rich protein 1 (1788 aa).

A compositionally biased stretch (low complexity) spans Met-1–Ala-53. Disordered stretches follow at residues Met-1–Gln-69, Thr-472–Thr-498, and Ser-532–Asp-617. Polar residues-rich tracts occupy residues Pro-60–Gln-69, Val-478–Leu-492, Ser-532–Pro-569, and Val-576–Pro-594. Residues Ser-670 and Ser-940 each carry the phosphoserine modification. Thr-1003 carries the post-translational modification Phosphothreonine. At Ser-1041 the chain carries Phosphoserine. Disordered stretches follow at residues Gln-1104–Tyr-1163 and Ile-1234–Ser-1264. Lys-1112 is covalently cross-linked (Glycyl lysine isopeptide (Lys-Gly) (interchain with G-Cter in SUMO2)). A compositionally biased stretch (basic and acidic residues) spans Pro-1126–Gly-1136. Lys-1137 participates in a covalent cross-link: Glycyl lysine isopeptide (Lys-Gly) (interchain with G-Cter in SUMO2). Ser-1262, Ser-1281, and Ser-1282 each carry phosphoserine. Thr-1394 bears the Phosphothreonine mark. Residue Ser-1401 is modified to Phosphoserine. The segment at Val-1494 to Ser-1588 is disordered. Positions Ile-1510–Lys-1537 are enriched in low complexity. The segment covering Ile-1545–Phe-1561 has biased composition (basic and acidic residues). Residues Ser-1562 to Ser-1575 show a composition bias toward low complexity.

In terms of assembly, interacts with TET1.

The protein localises to the chromosome. Plays an essential role in the protection and maintenance of transcriptional and developmental programs. Protects many bivalent promoters and poised enhancers from hypermethylation, showing a marked preference for these regulatory elements over other types of promoters or enhancers. Mechanistically, cooperates with TET1 and binds to DNA in a common complex to inhibit the binding of DNMT3A/3B and therefore de novo methylation. The chain is Glutamine and serine-rich protein 1 from Mus musculus (Mouse).